We begin with the raw amino-acid sequence, 435 residues long: Xylose isomerase (435 aa).

Residues aspartate 306 and aspartate 308 each coordinate Mg(2+).

The protein belongs to the xylose isomerase family. Homotetramer. Mg(2+) serves as cofactor.

It localises to the cytoplasm. The catalysed reaction is alpha-D-xylose = alpha-D-xylulofuranose. The protein is Xylose isomerase of Allorhizobium ampelinum (strain ATCC BAA-846 / DSM 112012 / S4) (Agrobacterium vitis (strain S4)).